A 445-amino-acid polypeptide reads, in one-letter code: Gastrula zinc finger protein 5-1 (445 aa).

Residues 1–38 form a disordered region; the sequence is MLQIKTEKEELDCGDDQNPKESSAVPLTDGASPEPQPQ. Phosphoserine; by CK2 is present on Ser89. Residues 185 to 210 form a C2H2-type 1; atypical zinc finger; it reads FICCKCGDSFAHHSDLHTHLYACAGH. C2H2-type zinc fingers lie at residues 239-261, 267-289, 295-317, 323-345, 351-373, 379-401, and 407-429; these read FKCT…HRIH, FTCT…SRTH, YVCT…MRTH, YACK…QNSH, FICT…QRTH, FICS…QMIH, and FSCS…QRVH.

In terms of biological role, binds to RNA homomers. This Xenopus laevis (African clawed frog) protein is Gastrula zinc finger protein 5-1.